Reading from the N-terminus, the 121-residue chain is Small ribosomal subunit protein bS6 (121 aa).

This sequence belongs to the bacterial ribosomal protein bS6 family.

Its function is as follows. Binds together with bS18 to 16S ribosomal RNA. The protein is Small ribosomal subunit protein bS6 of Rickettsia felis (strain ATCC VR-1525 / URRWXCal2) (Rickettsia azadi).